Consider the following 388-residue polypeptide: Na(+)/H(+) antiporter NhaA (388 aa).

Helical transmembrane passes span 14-34, 59-79, 95-115, 125-145, 154-174, 177-197, 200-220, 222-242, 257-277, 295-315, 328-348, and 362-382; these read TIGI…NSPL, LLLW…GLEI, TFPA…FASL, GWAI…SLLG, VFLM…IALF, TKLS…LFIM, MCVI…VSVL, SGVH…YRIN, GLHL…NAGV, IMLG…YLAV, LIQF…SLFI, and ADKL…YIVL.

The protein belongs to the NhaA Na(+)/H(+) (TC 2.A.33) antiporter family.

The protein localises to the cell inner membrane. It catalyses the reaction Na(+)(in) + 2 H(+)(out) = Na(+)(out) + 2 H(+)(in). In terms of biological role, na(+)/H(+) antiporter that extrudes sodium in exchange for external protons. The protein is Na(+)/H(+) antiporter NhaA of Nitratiruptor sp. (strain SB155-2).